A 226-amino-acid polypeptide reads, in one-letter code: Phosphoenolpyruvate guanylyltransferase (226 aa).

Positions 145, 161, and 164 each coordinate phosphoenolpyruvate.

This sequence belongs to the CofC family.

The enzyme catalyses phosphoenolpyruvate + GTP + H(+) = enolpyruvoyl-2-diphospho-5'-guanosine + diphosphate. The protein operates within cofactor biosynthesis; coenzyme F420 biosynthesis. Its function is as follows. Guanylyltransferase that catalyzes the activation of phosphoenolpyruvate (PEP) as enolpyruvoyl-2-diphospho-5'-guanosine, via the condensation of PEP with GTP. It is involved in the biosynthesis of coenzyme F420, a hydride carrier cofactor. The protein is Phosphoenolpyruvate guanylyltransferase of Nocardia farcinica (strain IFM 10152).